Reading from the N-terminus, the 319-residue chain is MMILAWCIAWVLDFIIGDPQHWPHPVRWIGRLITFVQRIVRRYCPGDKALRIGGGVMWVVVVGATWGVAWGVLALAQRIHPWFGWSVEVWMIFTTLAGRSLARAAQEVERPLRENDLAESRIKLSWIVGRDTSQLQPAQINRAVVETVAENTVDGIIAPLFFLFLGGAPLAMAYKAVNTLDSMVGYKHEKYRAIGMVSARMDDVANYLPARLSWLLLGIAAGLCRLSGWRALRIGWRDRYNHSSPNCAWSEACVAGALGIQLGGPNNYFGERVDKPWIGDAQRDISVDDISRTIRLMWVASTLALALFIAARCGLSGLA.

5 consecutive transmembrane segments (helical) span residues 56–76 (VMWVVVVGATWGVAWGVLALA), 82–102 (WFGWSVEVWMIFTTLAGRSLA), 153–173 (VDGIIAPLFFLFLGGAPLAMA), 204–224 (VANYLPARLSWLLLGIAAGLC), and 296–316 (LMWVASTLALALFIAARCGLS).

This sequence belongs to the CobD/CbiB family.

The protein localises to the cell membrane. The protein operates within cofactor biosynthesis; adenosylcobalamin biosynthesis. Its function is as follows. Converts cobyric acid to cobinamide by the addition of aminopropanol on the F carboxylic group. However, the true cosubstrate could be (R)-1-amino-2-propanol O-2-phosphate, leading to cobinamide phosphate. The chain is Cobalamin biosynthesis protein CbiB from Salmonella choleraesuis (strain SC-B67).